We begin with the raw amino-acid sequence, 434 residues long: Beta-phenylalanine transaminase (434 aa).

R41 contributes to the (S)-3-amino-3-phenylpropanoate binding site. Position 132 to 133 (132 to 133 (GT)) interacts with pyridoxal 5'-phosphate. K267 is modified (N6-(pyridoxal phosphate)lysine). T300 is a pyridoxal 5'-phosphate binding site.

This sequence belongs to the class-III pyridoxal-phosphate-dependent aminotransferase family. Homodimer. It depends on pyridoxal 5'-phosphate as a cofactor.

It carries out the reaction (S)-3-amino-3-phenylpropanoate + 2-oxoglutarate = 3-oxo-3-phenylpropanoate + L-glutamate. The enzyme catalyses (S)-3-amino-3-phenylpropanoate + pyruvate = 3-oxo-3-phenylpropanoate + L-alanine. Is inhibited by 2-aminooxyacetate (AOA), a mimic of beta-alanine and a known inhibitor of aminotransferases. Functionally, aminotransferase that acts exclusively on beta-amino acids and exhibits a broad substrate range in vitro, accepting meta-, para- and, to a lesser extent, ortho-substituted beta-phenylalanine derivatives as amino donors, and 2-oxoglutarate or pyruvate as amino acceptors. Is highly enantioselective toward (S)-beta-phenylalanine (is not active with (R)-beta-phenylalanine) and derivatives with different substituents on the phenyl ring, allowing the kinetic resolution of various racemic beta-amino acids to yield (R)-beta-amino acids with &gt;95% enantiomeric excess (ee). Highly prefers aromatic beta-amino acids over aliphatic beta-amino acids; cannot use beta-alanine or beta-glutamate as substrate. Is likely involved in the beta-phenylalanine degradation pathway that allows V.paradoxus strain CBF3 to use beta-phenylalanine as a sole nitrogen source. This chain is Beta-phenylalanine transaminase, found in Variovorax paradoxus.